Reading from the N-terminus, the 398-residue chain is Phosphoglycerate kinase (398 aa).

Substrate is bound by residues 21–23 (DFN), Arg-36, 59–62 (HLGR), Arg-119, and Arg-157. Residues Lys-208, Gly-296, Glu-327, and 354–357 (GGDS) each bind ATP.

This sequence belongs to the phosphoglycerate kinase family. Monomer.

The protein localises to the cytoplasm. The enzyme catalyses (2R)-3-phosphoglycerate + ATP = (2R)-3-phospho-glyceroyl phosphate + ADP. Its pathway is carbohydrate degradation; glycolysis; pyruvate from D-glyceraldehyde 3-phosphate: step 2/5. The chain is Phosphoglycerate kinase from Streptococcus pyogenes serotype M5 (strain Manfredo).